The primary structure comprises 313 residues: Glycine--tRNA ligase alpha subunit (313 aa).

Belongs to the class-II aminoacyl-tRNA synthetase family. Tetramer of two alpha and two beta subunits.

It localises to the cytoplasm. It carries out the reaction tRNA(Gly) + glycine + ATP = glycyl-tRNA(Gly) + AMP + diphosphate. The sequence is that of Glycine--tRNA ligase alpha subunit from Leuconostoc mesenteroides subsp. mesenteroides (strain ATCC 8293 / DSM 20343 / BCRC 11652 / CCM 1803 / JCM 6124 / NCDO 523 / NBRC 100496 / NCIMB 8023 / NCTC 12954 / NRRL B-1118 / 37Y).